Reading from the N-terminus, the 566-residue chain is Liver carboxylesterase 1 (566 aa).

Residues 1 to 18 (MWLRALVLATLAAFTAWG) form the signal peptide. Residue asparagine 79 is glycosylated (N-linked (GlcNAc...) asparagine). Cysteine 87 and cysteine 116 are joined by a disulfide. Residue serine 221 is the Acyl-ester intermediate of the active site. Cysteine 274 and cysteine 285 are disulfide-bonded. The Charge relay system role is filled by glutamate 354. Position 379 is a phosphoserine (serine 379). Residue histidine 467 is the Charge relay system of the active site.

It belongs to the type-B carboxylesterase/lipase family. In terms of assembly, homotrimer and homohexamer. Binds to beta-glucuronidase.

It is found in the endoplasmic reticulum lumen. It localises to the cytoplasm. The protein localises to the lipid droplet. It carries out the reaction a carboxylic ester + H2O = an alcohol + a carboxylate + H(+). It catalyses the reaction cholesteryl (9Z-octadecenoate) + H2O = cholesterol + (9Z)-octadecenoate + H(+). The enzyme catalyses 2-(5Z,8Z,11Z,14Z-eicosatetraenoyl)-glycerol + H2O = glycerol + (5Z,8Z,11Z,14Z)-eicosatetraenoate + H(+). The catalysed reaction is prostaglandin E2 1-glyceryl ester + H2O = prostaglandin E2 + glycerol + H(+). It carries out the reaction a cholesterol ester + H2O = cholesterol + a fatty acid + H(+). It catalyses the reaction prostaglandin F2alpha 1-glyceryl ester + H2O = prostaglandin F2alpha + glycerol + H(+). Functionally, involved in the detoxification of xenobiotics and in the activation of ester and amide prodrugs. Hydrolyzes aromatic and aliphatic esters, but has no catalytic activity toward amides or a fatty acyl-CoA ester. Displays fatty acid ethyl ester synthase activity, catalyzing the ethyl esterification of oleic acid to ethyloleate. Converts monoacylglycerides to free fatty acids and glycerol. Hydrolyzes of 2-arachidonoylglycerol and prostaglandins. Hydrolyzes cellular cholesteryl esters to free cholesterols and promotes reverse cholesterol transport (RCT) by facilitating both the initial and final steps in the process. First of all, allows free cholesterol efflux from macrophages to extracellular cholesterol acceptors and secondly, releases free cholesterol from lipoprotein-delivered cholesteryl esters in the liver for bile acid synthesis or direct secretion into the bile. The polypeptide is Liver carboxylesterase 1 (Macaca fascicularis (Crab-eating macaque)).